The chain runs to 122 residues: Large ribosomal subunit protein uL14 (122 aa).

Belongs to the universal ribosomal protein uL14 family. As to quaternary structure, part of the 50S ribosomal subunit. Forms a cluster with proteins L3 and L19. In the 70S ribosome, L14 and L19 interact and together make contacts with the 16S rRNA in bridges B5 and B8.

Binds to 23S rRNA. Forms part of two intersubunit bridges in the 70S ribosome. The polypeptide is Large ribosomal subunit protein uL14 (Methylobacterium radiotolerans (strain ATCC 27329 / DSM 1819 / JCM 2831 / NBRC 15690 / NCIMB 10815 / 0-1)).